Reading from the N-terminus, the 223-residue chain is N-terminal Xaa-Pro-Lys N-methyltransferase 1 (223 aa).

M1 carries the N-acetylmethionine modification. An N-acetylthreonine; in N-terminal Xaa-Pro-Lys N-methyltransferase 1, N-terminally processed modification is found at T2. S-adenosyl-L-methionine-binding positions include G69, R74, 91 to 93 (DIT), 119 to 120 (LQ), and Q135.

This sequence belongs to the methyltransferase superfamily. NTM1 family.

It localises to the nucleus. It catalyses the reaction N-terminal L-alanyl-L-prolyl-L-lysyl-[protein] + 3 S-adenosyl-L-methionine = N-terminal N,N,N-trimethyl-L-alanyl-L-prolyl-L-lysyl-[protein] + 3 S-adenosyl-L-homocysteine + 3 H(+). The catalysed reaction is N-terminal L-seryl-L-prolyl-L-lysyl-[protein] + 3 S-adenosyl-L-methionine = N-terminal N,N,N-trimethyl-L-seryl-L-prolyl-L-lysyl-[protein] + 3 S-adenosyl-L-homocysteine + 3 H(+). The enzyme catalyses N-terminal L-prolyl-L-prolyl-L-lysyl-[protein] + 2 S-adenosyl-L-methionine = N-terminal N,N-dimethyl-L-prolyl-L-prolyl-L-lysyl-[protein] + 2 S-adenosyl-L-homocysteine + 2 H(+). Its function is as follows. Distributive alpha-N-methyltransferase that methylates the N-terminus of target proteins containing the N-terminal motif [Ala/Gly/Pro/Ser]-Pro-Lys when the initiator Met is cleaved. Specifically catalyzes mono-, di- or tri-methylation of the exposed alpha-amino group of the Ala, Gly or Ser residue in the [Ala/Gly/Ser]-Pro-Lys motif and mono- or di-methylation of Pro in the Pro-Pro-Lys motif. Some of the substrates may be primed by NTMT2-mediated monomethylation. Catalyzes the trimethylation of the N-terminal Gly in CENPA (after removal of Met-1). Responsible for the N-terminal methylation of KLHL31, MYL2, MYL3, RB1, RCC1, RPL23A and SET. Required during mitosis for normal bipolar spindle formation and chromosome segregation via its action on RCC1. The chain is N-terminal Xaa-Pro-Lys N-methyltransferase 1 (NTMT1) from Homo sapiens (Human).